Here is a 248-residue protein sequence, read N- to C-terminus: Type III pantothenate kinase (248 aa).

6 to 13 (DCGNSLIK) lines the ATP pocket. Substrate contacts are provided by residues Tyr-92 and 99 to 102 (GLDR). The active-site Proton acceptor is the Asp-101. Asp-121 lines the K(+) pocket. Thr-124 contributes to the ATP binding site. Position 180 (Thr-180) interacts with substrate.

This sequence belongs to the type III pantothenate kinase family. Homodimer. NH4(+) serves as cofactor. It depends on K(+) as a cofactor.

The protein resides in the cytoplasm. The enzyme catalyses (R)-pantothenate + ATP = (R)-4'-phosphopantothenate + ADP + H(+). It participates in cofactor biosynthesis; coenzyme A biosynthesis; CoA from (R)-pantothenate: step 1/5. Functionally, catalyzes the phosphorylation of pantothenate (Pan), the first step in CoA biosynthesis. This is Type III pantothenate kinase from Pseudomonas aeruginosa (strain LESB58).